The following is an 81-amino-acid chain: Three-finger toxin MALT0051C (81 aa).

An N-terminal signal peptide occupies residues M1–T21. 4 cysteine pairs are disulfide-bonded: C24–C43, C38–C60, C62–C73, and C74–C79.

The protein belongs to the three-finger toxin family. Short-chain subfamily. Type I alpha-neurotoxin sub-subfamily. In terms of tissue distribution, expressed by the venom gland.

The protein localises to the secreted. Its function is as follows. Binds to muscle nicotinic acetylcholine receptor (nAChR) and inhibit acetylcholine from binding to the receptor, thereby impairing neuromuscular transmission. The protein is Three-finger toxin MALT0051C of Micrurus altirostris (Uruguayan coral snake).